Reading from the N-terminus, the 458-residue chain is Phosphoglucosamine mutase (458 aa).

S106 functions as the Phosphoserine intermediate in the catalytic mechanism. Mg(2+) contacts are provided by S106, D247, D249, and D251. Phosphoserine is present on S106.

This sequence belongs to the phosphohexose mutase family. It depends on Mg(2+) as a cofactor. Activated by phosphorylation.

The catalysed reaction is alpha-D-glucosamine 1-phosphate = D-glucosamine 6-phosphate. Its function is as follows. Catalyzes the conversion of glucosamine-6-phosphate to glucosamine-1-phosphate. The sequence is that of Phosphoglucosamine mutase from Chlamydia pneumoniae (Chlamydophila pneumoniae).